The following is a 254-amino-acid chain: Ubiquinone/menaquinone biosynthesis C-methyltransferase UbiE (254 aa).

Residues T77, D98, N126–A127, and S143 contribute to the S-adenosyl-L-methionine site.

Belongs to the class I-like SAM-binding methyltransferase superfamily. MenG/UbiE family.

The enzyme catalyses a 2-demethylmenaquinol + S-adenosyl-L-methionine = a menaquinol + S-adenosyl-L-homocysteine + H(+). It catalyses the reaction a 2-methoxy-6-(all-trans-polyprenyl)benzene-1,4-diol + S-adenosyl-L-methionine = a 5-methoxy-2-methyl-3-(all-trans-polyprenyl)benzene-1,4-diol + S-adenosyl-L-homocysteine + H(+). It participates in quinol/quinone metabolism; menaquinone biosynthesis; menaquinol from 1,4-dihydroxy-2-naphthoate: step 2/2. It functions in the pathway cofactor biosynthesis; ubiquinone biosynthesis. Its function is as follows. Methyltransferase required for the conversion of demethylmenaquinol (DMKH2) to menaquinol (MKH2) and the conversion of 2-polyprenyl-6-methoxy-1,4-benzoquinol (DDMQH2) to 2-polyprenyl-3-methyl-6-methoxy-1,4-benzoquinol (DMQH2). The sequence is that of Ubiquinone/menaquinone biosynthesis C-methyltransferase UbiE from Blochmanniella floridana.